Reading from the N-terminus, the 147-residue chain is Cytochrome c-type biogenesis protein CcmE (147 aa).

The Cytoplasmic portion of the chain corresponds to 1–7 (MKPRHKR). The helical; Signal-anchor for type II membrane protein transmembrane segment at 8 to 28 (AAIIAGGLAALGIAAYLVLNA) threads the bilayer. The Periplasmic portion of the chain corresponds to 29–147 (FQSNLVFFFS…QIQKTIKSLK (119 aa)). Residues His-121 and Tyr-125 each coordinate heme.

Belongs to the CcmE/CycJ family.

The protein localises to the cell inner membrane. Its function is as follows. Heme chaperone required for the biogenesis of c-type cytochromes. Transiently binds heme delivered by CcmC and transfers the heme to apo-cytochromes in a process facilitated by CcmF and CcmH. This chain is Cytochrome c-type biogenesis protein CcmE, found in Albidiferax ferrireducens (strain ATCC BAA-621 / DSM 15236 / T118) (Rhodoferax ferrireducens).